Here is a 725-residue protein sequence, read N- to C-terminus: Manganese-exporting P-type ATPase (725 aa).

The region spanning 25–92 (GRMRIQIEWV…AISGAAHVAA (68 aa)) is the HMA domain. 6 consecutive transmembrane segments (helical) span residues 101–119 (HSSDIRNIEVLRMAIGAAA), 142–160 (LVASGVTIFTGYPFLRGAL), 165–179 (TGTDALVSVATIASL), 188–202 (LAVLWLLNIGEYLQD), 335–359 (VGENFSRCFVPTSFVVSAITLAITK), and 365–383 (MTVLLIACPCAVGLATPTA). Asp416 serves as the catalytic 4-aspartylphosphate intermediate. Residues Asp416, Thr418, and Asp618 each coordinate Mg(2+). A run of 2 helical transmembrane segments spans residues 669–688 (AVEVIRENYGMSIAVNAAGL) and 698–717 (PVLAAVLHNASSVAVVANSS).

It belongs to the cation transport ATPase (P-type) (TC 3.A.3) family. Type IB subfamily.

It is found in the cell membrane. It carries out the reaction Mn(2+)(in) + ATP + H2O = Mn(2+)(out) + ADP + phosphate + H(+). Functionally, high affinity, slow turnover Mn(2+) transporting ATPase. The sequence is that of Manganese-exporting P-type ATPase (ctpC) from Mycobacterium leprae (strain TN).